The following is a 237-amino-acid chain: Sulfolipid-1 exporter Sap (237 aa).

A run of 6 helical transmembrane segments spans residues 5 to 25 (VLVL…VVLM), 38 to 58 (FLCG…VVLG), 66 to 86 (FSVA…AFAL), 141 to 161 (VSGL…AAIL), 171 to 191 (ALAV…PLVS), and 217 to 237 (DAAL…LSNL).

The protein belongs to the peptidoglycolipid addressing protein (GAP) (TC 2.A.116) family.

It localises to the cell inner membrane. In terms of biological role, required for the transport across the inner membrane of sulfolipid-1 (SL-1), which is a major cell wall lipid of pathogenic mycobacteria. Could also transport SL1278 (2-palmitoyl-3-(C43)-phthioceranyl-alpha, alpha'-D-trehalose-2'-sulfate), which is the precursor of SL-1. May potentiate SL-1 levels and confer specificity for sulfolipids over structurally similar glycolipids. The protein is Sulfolipid-1 exporter Sap of Mycobacterium tuberculosis (strain ATCC 25618 / H37Rv).